The sequence spans 388 residues: Mannitol-1-phosphate 5-dehydrogenase (388 aa).

Residue 5–16 (AIQFGGGNIGRG) coordinates NAD(+). Lysine 213 is a catalytic residue.

This sequence belongs to the mannitol dehydrogenase family. In terms of assembly, monomer.

The catalysed reaction is D-mannitol 1-phosphate + NAD(+) = beta-D-fructose 6-phosphate + NADH + H(+). In terms of biological role, catalyzes the NAD(H)-dependent interconversion of D-fructose 6-phosphate and D-mannitol 1-phosphate in the metabolism of mannitol. Has a strong preference for NADH over NADPH. This is Mannitol-1-phosphate 5-dehydrogenase (mpdA) from Aspergillus niger (strain ATCC MYA-4892 / CBS 513.88 / FGSC A1513).